A 612-amino-acid chain; its full sequence is Probable translation initiation factor IF-2 (612 aa).

The tr-type G domain occupies 11 to 229 (LRQPIVVVLG…VLAGLTQRYL (219 aa)). The segment at 20 to 27 (GHVDHGKT) is G1. A GTP-binding site is contributed by 20 to 27 (GHVDHGKT). Positions 45 to 49 (LITQH) are G2. Positions 84–87 (DTPG) are G3. GTP-binding positions include 84-88 (DTPGH) and 138-141 (NKID). Residues 138–141 (NKID) are G4. Positions 207–209 (SAK) are G5.

Belongs to the TRAFAC class translation factor GTPase superfamily. Classic translation factor GTPase family. IF-2 subfamily.

Functionally, function in general translation initiation by promoting the binding of the formylmethionine-tRNA to ribosomes. Seems to function along with eIF-2. The sequence is that of Probable translation initiation factor IF-2 from Hyperthermus butylicus (strain DSM 5456 / JCM 9403 / PLM1-5).